We begin with the raw amino-acid sequence, 448 residues long: Trk system potassium uptake protein TrkA homolog 1 (448 aa).

The 124-residue stretch at 1-124 folds into the RCK N-terminal 1 domain; sequence MKAVIIGAGE…RAQVGVDLMI (124 aa). NAD(+)-binding positions include 7-11, Asp-29, 70-71, and Arg-101; these read GAGEV and TG. An RCK C-terminal 1 domain is found at 144 to 225; sequence IDAEMFAEGK…MEDLESVFGS (82 aa). In terms of domain architecture, RCK N-terminal 2 spans 230–348; the sequence is RTRILLIGCG…FEMVGIDMAV (119 aa). 232-262 serves as a coordination point for NAD(+); it reads RILLIGCGIVGMYLAKLIDKEENADLRIIEH. The RCK C-terminal 2 domain maps to 368-448; sequence QTLTTIEGER…AASEVEKYFK (81 aa).

In terms of biological role, part of a potassium transport system. The protein is Trk system potassium uptake protein TrkA homolog 1 (trkA1) of Methanosarcina mazei (strain ATCC BAA-159 / DSM 3647 / Goe1 / Go1 / JCM 11833 / OCM 88) (Methanosarcina frisia).